The sequence spans 119 residues: Large ribosomal subunit protein bL20 (119 aa).

It belongs to the bacterial ribosomal protein bL20 family.

Binds directly to 23S ribosomal RNA and is necessary for the in vitro assembly process of the 50S ribosomal subunit. It is not involved in the protein synthesizing functions of that subunit. In Shewanella woodyi (strain ATCC 51908 / MS32), this protein is Large ribosomal subunit protein bL20.